The chain runs to 207 residues: MSTIIMDLCSYTRLGLSGYLVSRGVKKREINDIETVDELAIACGAHQPSVVFINEDCFIHTPSDSQQIKQIINQHPDTLFIVFMAIANVHFDEYLLVRKNLLISSKSIKPDSLDTLLGDILKKESGISGTINLPTLSLSRTESSMLRMWMEGQGTIQISDRMNIKAKTVSSHKGNIKRKIKTHNKQVIYHVVRLTDNVTNGIFANMR.

Residues 131 to 196 enclose the HTH luxR-type domain; the sequence is INLPTLSLSR…VIYHVVRLTD (66 aa). Positions 155–174 form a DNA-binding region, H-T-H motif; it reads TIQISDRMNIKAKTVSSHKG.

This sequence belongs to the RcsA family. In terms of assembly, interacts with RcsB.

Component of the Rcs signaling system, which controls transcription of numerous genes. Binds, with RcsB, to the RcsAB box to regulate expression of genes. This Salmonella typhi protein is Transcriptional regulatory protein RcsA.